A 493-amino-acid polypeptide reads, in one-letter code: Probable GTP-binding protein OBGM, mitochondrial (493 aa).

The N-terminal 28 residues, 1–28, are a transit peptide targeting the mitochondrion; sequence MWLIRAIVPVRYLGSYKRPQKPPWMRNP. Residues 48-303 form the Obg domain; that stretch reads TRMRDRFTLY…AVLILELKSI (256 aa). Disordered stretches follow at residues 65 to 89 and 146 to 215; these read SGCS…GGRG and GEIP…EDDD. The segment covering 187-196 has biased composition (acidic residues); the sequence is SESDQDDTEQ. Residues 304-476 enclose the OBG-type G domain; sequence ADVGLVGMPN…LKDGLKMLVD (173 aa). GTP-binding positions include 310–317 and 356–360; these read GMPNAGKS and DIPGL.

Belongs to the TRAFAC class OBG-HflX-like GTPase superfamily. OBG GTPase family.

The protein localises to the mitochondrion. Its function is as follows. May bind GTP and have GTPase activity. The sequence is that of Probable GTP-binding protein OBGM, mitochondrial (ATOBGM) from Arabidopsis thaliana (Mouse-ear cress).